A 503-amino-acid chain; its full sequence is ATP synthase subunit alpha (503 aa).

171 to 178 contacts ATP; it reads DRQTGKTA.

Belongs to the ATPase alpha/beta chains family. In terms of assembly, F-type ATPases have 2 components, CF(1) - the catalytic core - and CF(0) - the membrane proton channel. CF(1) has five subunits: alpha(3), beta(3), gamma(1), delta(1), epsilon(1). CF(0) has four main subunits: a(1), b(1), b'(1) and c(9-12).

It localises to the cellular thylakoid membrane. It catalyses the reaction ATP + H2O + 4 H(+)(in) = ADP + phosphate + 5 H(+)(out). Functionally, produces ATP from ADP in the presence of a proton gradient across the membrane. The alpha chain is a regulatory subunit. In Synechococcus sp. (strain PCC 6716), this protein is ATP synthase subunit alpha.